A 633-amino-acid polypeptide reads, in one-letter code: Mitochondrial Rho GTPase 1 (633 aa).

The 170-residue stretch at 1–170 (MATVRICVCG…FFLCQKAVTH (170 aa)) folds into the Miro 1 domain. The Cytoplasmic segment spans residues 1 to 603 (MATVRICVCG…PRSEEDVEGK (603 aa)). GTP is bound by residues 10–17 (GDEGTGKS), 59–63 (DTSAL), and 115–118 (NKSD). EF-hand domains lie at 186-221 (AAVAALQRIFYLSDKDRDGYLSDKELEDFQMRCFEK) and 306-341 (EGYRFFVNLFLLSDKDNDGGLNDAELASLFAPTPGL). Ca(2+) contacts are provided by Asp199, Asp201, Asp203, Tyr205, Glu210, Asp319, Asp321, Asp323, and Glu330. The segment at 398 to 418 (NPSTTAALKVTRPRKRRKRPG) is disordered. Residues 408-418 (TRPRKRRKRPG) are compositionally biased toward basic residues. Residues 422–588 (RNVVLGHVLG…FVHIAEAAME (167 aa)) form the Miro 2 domain. Residues 431 to 438 (GPPGSGKS), 467 to 471 (ELPGG), and 537 to 540 (LKAD) each bind GTP. The chain crosses the membrane as a helical; Anchor for type IV membrane protein span at residues 604–624 (WMAWGIALGAVVCAGAAAVMI). Over 625–633 (WRRVSGSGT) the chain is Mitochondrial intermembrane.

This sequence belongs to the mitochondrial Rho GTPase family.

It localises to the mitochondrion outer membrane. Its function is as follows. Mitochondrial GTPase involved in mitochondrial trafficking. Probably involved in control of anterograde transport of mitochondria and their subcellular distribution. The sequence is that of Mitochondrial Rho GTPase 1 (gem1) from Aspergillus oryzae (strain ATCC 42149 / RIB 40) (Yellow koji mold).